The sequence spans 292 residues: GTP cyclohydrolase FolE2 (292 aa).

Belongs to the GTP cyclohydrolase IV family.

The enzyme catalyses GTP + H2O = 7,8-dihydroneopterin 3'-triphosphate + formate + H(+). It participates in cofactor biosynthesis; 7,8-dihydroneopterin triphosphate biosynthesis; 7,8-dihydroneopterin triphosphate from GTP: step 1/1. Its function is as follows. Converts GTP to 7,8-dihydroneopterin triphosphate. The protein is GTP cyclohydrolase FolE2 of Staphylococcus epidermidis (strain ATCC 35984 / DSM 28319 / BCRC 17069 / CCUG 31568 / BM 3577 / RP62A).